A 384-amino-acid polypeptide reads, in one-letter code: Gibberellin 3-beta-dioxygenase 1 (384 aa).

A Fe2OG dioxygenase domain is found at 225–327 (TLTSTIHLNM…RISMPYFLGP (103 aa)). Fe cation-binding residues include H250, D252, and H308. 2-oxoglutarate-binding residues include R318 and S320.

This sequence belongs to the iron/ascorbate-dependent oxidoreductase family. Requires L-ascorbate as cofactor. The cofactor is Fe(2+). In terms of tissue distribution, expressed in unopened flowers.

The enzyme catalyses gibberellin A20 + 2-oxoglutarate + O2 = gibberellin A1 + succinate + CO2. It functions in the pathway plant hormone biosynthesis; gibberellin biosynthesis. Its function is as follows. Catalyzes the 3-beta-hydroxylation of the inactive gibberellin precursors, leading to the formation of bioactive gibberellins. In vitro, converts the precursors GA20, GA5, GA44 and GA9 to the corresponding 3-beta-hydroxylated bioactive products GA1, GA3, GA38 and GA4, respectively. Involved in the production of bioactive GA for vegetative growth and development. May possess 2,3-desaturase activity, catalyzing the conversion of GA9 to 2,3-dehydro-GA9, and GA20 to GA5 (2,3-dehydro GA20). May possess 2-beta-hydroxylase activity, catalyzing the conversion of GA1 and GA4 to the corresponding 2-beta-hydroxylated products GA8 and GA34, respectively. This is Gibberellin 3-beta-dioxygenase 1 from Oryza sativa subsp. japonica (Rice).